We begin with the raw amino-acid sequence, 88 residues long: Large ribosomal subunit protein bL31B (88 aa).

It belongs to the bacterial ribosomal protein bL31 family. Type B subfamily. Part of the 50S ribosomal subunit.

This is Large ribosomal subunit protein bL31B from Nocardia farcinica (strain IFM 10152).